A 317-amino-acid chain; its full sequence is MANEEELQTAESAFVTGARRYSNDYSESESSSKHSGCSTPVEGTPAEAATTIGARASGGSTTWQRLRQLLMERGSDVHLPVTEIHLKSQEWFGDFITKHEVPRKVFHSSIGFFTLALYVRDVDYRNVRLPLIVGFVHVLLLDVIRLHWPAFNTLYCQVTGLLMRKKEVHTYNGVLWYLLGLIFAFSFFSKDVALVSLFLLSWCDTAASTVGRLYGHLTPRISRNKSLAGSLAAFVVGVISCAVFYGYFVPAYSHVNHPGEIMWNPETSRLSLVQLSLLGGFVASLSEGIDLFNWDDNFTIPVLSAIFMHTIIAFSQR.

The segment at 1 to 44 (MANEEELQTAESAFVTGARRYSNDYSESESSSKHSGCSTPVEGT) is disordered. The Lumenal portion of the chain corresponds to 1–130 (MANEEELQTA…DVDYRNVRLP (130 aa)). Low complexity predominate over residues 23–38 (NDYSESESSSKHSGCS). A helical membrane pass occupies residues 131–151 (LIVGFVHVLLLDVIRLHWPAF). Topologically, residues 152–167 (NTLYCQVTGLLMRKKE) are cytoplasmic. A helical transmembrane segment spans residues 168–188 (VHTYNGVLWYLLGLIFAFSFF). Topologically, residues 189–190 (SK) are lumenal. Residues 191–211 (DVALVSLFLLSWCDTAASTVG) form a helical membrane-spanning segment. Over 212–230 (RLYGHLTPRISRNKSLAGS) the chain is Cytoplasmic. Residues 231–251 (LAAFVVGVISCAVFYGYFVPA) form a helical membrane-spanning segment. Over 252–271 (YSHVNHPGEIMWNPETSRLS) the chain is Lumenal. A helical transmembrane segment spans residues 272-292 (LVQLSLLGGFVASLSEGIDLF). Asn293 is a topological domain (cytoplasmic). Residues 294-314 (WDDNFTIPVLSAIFMHTIIAF) form a helical membrane-spanning segment. Residues 315–317 (SQR) lie on the Lumenal side of the membrane.

The protein belongs to the DGK1 family. Ca(2+) is required as a cofactor. Requires Mg(2+) as cofactor.

The protein localises to the endoplasmic reticulum membrane. The protein resides in the nucleus membrane. The enzyme catalyses a 1,2-diacyl-sn-glycerol + CTP = a 1,2-diacyl-sn-glycero-3-phosphate + CDP + H(+). In terms of biological role, CTP-dependent diacylglycerol kinase that catalyzes the phosphorylation of diacylglycerol (DAG) to phosphatidate (PA). Controls phosphatidate levels at the nuclear envelope. May be involved in vesicle trafficking between the endoplasmic reticulum and the Golgi apparatus. The protein is CTP-dependent diacylglycerol kinase 1 (DGK1) of Eremothecium gossypii (strain ATCC 10895 / CBS 109.51 / FGSC 9923 / NRRL Y-1056) (Yeast).